Here is a 476-residue protein sequence, read N- to C-terminus: Abscisic acid 8'-hydroxylase CYP707A1 (476 aa).

A helical transmembrane segment spans residues 5–25 (FEIFLYISMFVLGYLSYYFCF). Residue C422 participates in heme binding.

Belongs to the cytochrome P450 family. Requires heme as cofactor. As to expression, expressed in ovaries (specifically in ovules and placenta), sepals, petals and pedicels.

It localises to the membrane. The enzyme catalyses 2-cis-(+)-abscisate + reduced [NADPH--hemoprotein reductase] + O2 = (+)-8'-hydroxyabscisate + oxidized [NADPH--hemoprotein reductase] + H2O + H(+). Its pathway is plant hormone degradation; abscisic acid degradation. Functionally, involved in the oxidative degradation of abscisic acid, especially in pollinated ovaries. In Solanum lycopersicum (Tomato), this protein is Abscisic acid 8'-hydroxylase CYP707A1.